A 393-amino-acid chain; its full sequence is Erythronate-4-phosphate dehydrogenase (393 aa).

Substrate is bound by residues Ser-57 and Thr-79. An NAD(+)-binding site is contributed by Asp-159. Arg-229 is a catalytic residue. Asp-253 is an NAD(+) binding site. The active site involves Glu-258. The Proton donor role is filled by His-275. Gly-278 serves as a coordination point for NAD(+). Tyr-279 contributes to the substrate binding site.

This sequence belongs to the D-isomer specific 2-hydroxyacid dehydrogenase family. PdxB subfamily. In terms of assembly, homodimer.

Its subcellular location is the cytoplasm. It catalyses the reaction 4-phospho-D-erythronate + NAD(+) = (R)-3-hydroxy-2-oxo-4-phosphooxybutanoate + NADH + H(+). The protein operates within cofactor biosynthesis; pyridoxine 5'-phosphate biosynthesis; pyridoxine 5'-phosphate from D-erythrose 4-phosphate: step 2/5. Catalyzes the oxidation of erythronate-4-phosphate to 3-hydroxy-2-oxo-4-phosphonooxybutanoate. The chain is Erythronate-4-phosphate dehydrogenase from Colwellia psychrerythraea (strain 34H / ATCC BAA-681) (Vibrio psychroerythus).